The sequence spans 400 residues: Phosphoglycerate kinase (400 aa).

Substrate-binding positions include 24–26, Arg-40, 63–66, Arg-121, and Arg-154; these read DFN and HFGR. ATP is bound by residues Lys-205, Gly-296, Glu-327, and 356-359; that span reads GGDS.

The protein belongs to the phosphoglycerate kinase family. As to quaternary structure, monomer.

The protein resides in the cytoplasm. It carries out the reaction (2R)-3-phosphoglycerate + ATP = (2R)-3-phospho-glyceroyl phosphate + ADP. It functions in the pathway carbohydrate degradation; glycolysis; pyruvate from D-glyceraldehyde 3-phosphate: step 2/5. The chain is Phosphoglycerate kinase from Thermosynechococcus vestitus (strain NIES-2133 / IAM M-273 / BP-1).